The primary structure comprises 106 residues: Cell division protein FtsL (106 aa).

Residues 1 to 22 (MPRQSPPNLAKLIALDLLTVGR) lie on the Cytoplasmic side of the membrane. The chain crosses the membrane as a helical span at residues 23–43 (VPLLLLVLIFSCAMGVVFMTH). The Periplasmic portion of the chain corresponds to 44 to 106 (HTRQAISAKD…SDKEVVINLK (63 aa)).

It belongs to the FtsL family. As to quaternary structure, part of a complex composed of FtsB, FtsL and FtsQ.

The protein localises to the cell inner membrane. Its function is as follows. Essential cell division protein. May link together the upstream cell division proteins, which are predominantly cytoplasmic, with the downstream cell division proteins, which are predominantly periplasmic. The chain is Cell division protein FtsL from Vibrio cholerae serotype O1 (strain ATCC 39315 / El Tor Inaba N16961).